The sequence spans 361 residues: Chorismate synthase (361 aa).

NADP(+) contacts are provided by Arg-48 and Arg-54. Residues 125–127, 238–239, Gly-278, 293–297, and Arg-319 each bind FMN; these read RSS, NA, and KPTSS.

The protein belongs to the chorismate synthase family. Homotetramer. Requires FMNH2 as cofactor.

The enzyme catalyses 5-O-(1-carboxyvinyl)-3-phosphoshikimate = chorismate + phosphate. Its pathway is metabolic intermediate biosynthesis; chorismate biosynthesis; chorismate from D-erythrose 4-phosphate and phosphoenolpyruvate: step 7/7. Its function is as follows. Catalyzes the anti-1,4-elimination of the C-3 phosphate and the C-6 proR hydrogen from 5-enolpyruvylshikimate-3-phosphate (EPSP) to yield chorismate, which is the branch point compound that serves as the starting substrate for the three terminal pathways of aromatic amino acid biosynthesis. This reaction introduces a second double bond into the aromatic ring system. The polypeptide is Chorismate synthase (Yersinia enterocolitica serotype O:8 / biotype 1B (strain NCTC 13174 / 8081)).